The sequence spans 499 residues: Putative protease Do-like 12, mitochondrial (499 aa).

A mitochondrion-targeting transit peptide spans 1–24 (MLFRSCVGMVSRYSRALLPTITIS). The segment at 94-259 (GGSGFAIAGK…IPTPIIRHFI (166 aa)) is serine protease. Active-site charge relay system residues include H110, D144, and S222. Residues 272-356 (GSLVLSCQSM…DENILVKVLR (85 aa)) enclose the PDZ domain.

It belongs to the peptidase S1C family.

It localises to the mitochondrion matrix. Functionally, putative serine protease. The polypeptide is Putative protease Do-like 12, mitochondrial (DEGP12) (Arabidopsis thaliana (Mouse-ear cress)).